Here is a 332-residue protein sequence, read N- to C-terminus: Acetyl-coenzyme A carboxylase carboxyl transferase subunit alpha (332 aa).

A CoA carboxyltransferase C-terminal domain is found at 44 to 298; the sequence is QLESRAQNLR…KETLVNNLEE (255 aa).

Belongs to the AccA family. In terms of assembly, acetyl-CoA carboxylase is a heterohexamer composed of biotin carboxyl carrier protein (AccB), biotin carboxylase (AccC) and two subunits each of ACCase subunit alpha (AccA) and ACCase subunit beta (AccD).

It is found in the cytoplasm. It catalyses the reaction N(6)-carboxybiotinyl-L-lysyl-[protein] + acetyl-CoA = N(6)-biotinyl-L-lysyl-[protein] + malonyl-CoA. The protein operates within lipid metabolism; malonyl-CoA biosynthesis; malonyl-CoA from acetyl-CoA: step 1/1. Functionally, component of the acetyl coenzyme A carboxylase (ACC) complex. First, biotin carboxylase catalyzes the carboxylation of biotin on its carrier protein (BCCP) and then the CO(2) group is transferred by the carboxyltransferase to acetyl-CoA to form malonyl-CoA. In Crocosphaera subtropica (strain ATCC 51142 / BH68) (Cyanothece sp. (strain ATCC 51142)), this protein is Acetyl-coenzyme A carboxylase carboxyl transferase subunit alpha.